The sequence spans 519 residues: Sorting nexin-2 (519 aa).

2 disordered regions span residues 1–20 (MAAEREPPPLGDGKPTDFEE) and 30–103 (STVS…VTPV). Low complexity-rich tracts occupy residues 30 to 44 (STVSTLESSPSSPDP) and 93 to 103 (SSETSPAVTPV). A Phosphoserine modification is found at serine 97. Threonine 101 and threonine 104 each carry phosphothreonine. 2 positions are modified to phosphoserine: serine 117 and serine 119. One can recognise a PX domain in the interval 140–269 (FDIEIGVSDP…QFLESSELPR (130 aa)). 4 residues coordinate a 1,2-diacyl-sn-glycero-3-phospho-(1D-myo-inositol-3-phosphate): arginine 183, serine 185, lysine 211, and arginine 235. Serine 185 is modified (phosphoserine). Positions 260 to 519 (QFLESSELPR…AFLPEAKAIA (260 aa)) are interaction with RhoG. Position 277 is a phosphoserine (serine 277). Positions 278 to 295 (GAGILRMVNKAADAVNKM) are membrane-binding amphipathic helix. A BAR domain is found at 299–519 (MNESDAWFEE…AFLPEAKAIA (221 aa)). Lysine 469 bears the N6-acetyllysine mark.

The protein belongs to the sorting nexin family. Predominantly forms heterodimers with BAR domain-containing sorting nexins SNX5, SNX6 and SNX32; can self-associate to form homodimers. The heterodimers are proposed to self-assemble into helical arrays on the membrane to stabilize and expand local membrane curvature underlying endosomal tubule formation. Thought to be a component of the originally described retromer complex (also called SNX-BAR retromer) which is a pentamer containing the heterotrimeric retromer cargo-selective complex (CSC), also decribed as vacuolar protein sorting subcomplex (VPS) and a heterodimeric membrane-deforming subcomplex formed between SNX1 or SNX2 and SNX5 or SNX6 (also called SNX-BAR subcomplex); the respective CSC and SNX-BAR subcomplexes associate with low affinity. Interacts with SNX5, SNX6, SNX32, VPS26A, VPS29, VPS35, FNBP1, KALRN, RHOG (GDP-bound form).

It localises to the early endosome membrane. The protein localises to the cell projection. It is found in the lamellipodium. Its function is as follows. Involved in several stages of intracellular trafficking. Interacts with membranes containing phosphatidylinositol 3-phosphate (PtdIns(3P)) or phosphatidylinositol 3,5-bisphosphate (PtdIns(3,5)P2). Acts in part as component of the retromer membrane-deforming SNX-BAR subcomplex. The SNX-BAR retromer mediates retrograde transport of cargo proteins from endosomes to the trans-Golgi network (TGN) and is involved in endosome-to-plasma membrane transport for cargo protein recycling. The SNX-BAR subcomplex functions to deform the donor membrane into a tubular profile called endosome-to-TGN transport carrier (ETC). Can sense membrane curvature and has in vitro vesicle-to-membrane remodeling activity. Required for retrograde endosome-to-TGN transport of TGN38. Promotes KALRN- and RHOG-dependent but retromer-independent membrane remodeling such as lamellipodium formation; the function is dependent on GEF activity of KALRN. The chain is Sorting nexin-2 (SNX2) from Bos taurus (Bovine).